We begin with the raw amino-acid sequence, 90 residues long: Probable Fe(2+)-trafficking protein (90 aa).

The protein belongs to the Fe(2+)-trafficking protein family.

Its function is as follows. Could be a mediator in iron transactions between iron acquisition and iron-requiring processes, such as synthesis and/or repair of Fe-S clusters in biosynthetic enzymes. The sequence is that of Probable Fe(2+)-trafficking protein from Acinetobacter baylyi (strain ATCC 33305 / BD413 / ADP1).